Here is a 556-residue protein sequence, read N- to C-terminus: Jerky protein homolog (556 aa).

Residues 11–62 (RGEKRKRVVLTLKEKIDICTRLEKGESRKALMQEYNVGMSTLYDIRAHKAQL) enclose the HTH psq-type domain. DNA-binding regions (H-T-H motif) lie at residues 38 to 58 (RKAL…IRAH) and 110 to 142 (PMLI…FKAR). Residues 77 to 149 (QRRTLHTPKL…KARHGIKKLD (73 aa)) form the HTH CENPB-type domain. Positions 213–382 (KDRLTVLMCA…VPSHVFRRAW (170 aa)) constitute a DDE-1 domain. Phosphoserine is present on serine 414. Positions 439 to 482 (SWGVAGREAEGGRPPAATSPAEVVWSSEKTPKADQDGRGDPGEG) are disordered. Residues 467–479 (KTPKADQDGRGDP) show a composition bias toward basic and acidic residues.

Belongs to the tigger transposable element derived protein family. In terms of tissue distribution, expressed ubiquitously.

It localises to the nucleus. Functionally, may bind DNA. The sequence is that of Jerky protein homolog from Homo sapiens (Human).